The primary structure comprises 443 residues: Transmembrane protein 184C (443 aa).

A run of 7 helical transmembrane segments spans residues 15-35 (LVVL…IWKL), 46-66 (AWFI…WGIL), 84-104 (ILWM…YPDI), 182-202 (PVTT…EGDF), 210-230 (YLVI…VLFY), 252-272 (VVFV…AGVI), and 284-304 (VATG…AVAH). The span at 369–378 (TSLLSSSTQD) shows a compositional bias: polar residues. Residues 369–422 (TSLLSSSTQDPISAASSIPPSPSGHYQGFGQTITPQTTPTATTMPEELYSADSP) are disordered. Positions 399-411 (QTITPQTTPTATT) are enriched in low complexity.

Belongs to the TMEM184 family.

It localises to the membrane. May play a role in cell growth. This chain is Transmembrane protein 184C (tmem184c), found in Xenopus tropicalis (Western clawed frog).